We begin with the raw amino-acid sequence, 84 residues long: Cell division topological specificity factor (84 aa).

Belongs to the MinE family.

Its function is as follows. Prevents the cell division inhibition by proteins MinC and MinD at internal division sites while permitting inhibition at polar sites. This ensures cell division at the proper site by restricting the formation of a division septum at the midpoint of the long axis of the cell. This Burkholderia ambifaria (strain MC40-6) protein is Cell division topological specificity factor.